The sequence spans 306 residues: uncharacterized protein (306 aa).

This is an uncharacterized protein from Haemophilus influenzae (strain ATCC 51907 / DSM 11121 / KW20 / Rd).